Reading from the N-terminus, the 343-residue chain is Ribosomal RNA-processing protein 8 (343 aa).

The disordered stretch occupies residues 1–123 (MGKKRKITDE…NDDVAAAPEE (123 aa)). Residues 7-33 (ITDEKDAQHVPAEKREKVENWLKKSTE) show a composition bias toward basic and acidic residues. 2 stretches are compositionally biased toward basic residues: residues 45 to 59 (KKKR…KLAA) and 89 to 101 (KKKR…KKKF). Positions 112 to 123 (TENDDVAAAPEE) are enriched in acidic residues. Residues His169, Gly204, Asp224, Asp236, Met237, and Cys253 each coordinate S-adenosyl-L-methionine.

Belongs to the methyltransferase superfamily. RRP8 family.

The protein resides in the nucleus. It is found in the nucleolus. Probable methyltransferase required to silence rDNA. Involved in regulation of antisense ribosomal siRNA production. Required for the N1-methyladenosine modification of 26S rRNAs. This Caenorhabditis elegans protein is Ribosomal RNA-processing protein 8 (rrp-8).